The chain runs to 376 residues: Anhydro-N-acetylmuramic acid kinase (376 aa).

11–18 contributes to the ATP binding site; the sequence is GTSMDGVD.

Belongs to the anhydro-N-acetylmuramic acid kinase family.

The enzyme catalyses 1,6-anhydro-N-acetyl-beta-muramate + ATP + H2O = N-acetyl-D-muramate 6-phosphate + ADP + H(+). It functions in the pathway amino-sugar metabolism; 1,6-anhydro-N-acetylmuramate degradation. Its pathway is cell wall biogenesis; peptidoglycan recycling. Functionally, catalyzes the specific phosphorylation of 1,6-anhydro-N-acetylmuramic acid (anhMurNAc) with the simultaneous cleavage of the 1,6-anhydro ring, generating MurNAc-6-P. Is required for the utilization of anhMurNAc either imported from the medium or derived from its own cell wall murein, and thus plays a role in cell wall recycling. In Acinetobacter baylyi (strain ATCC 33305 / BD413 / ADP1), this protein is Anhydro-N-acetylmuramic acid kinase.